A 244-amino-acid polypeptide reads, in one-letter code: Probable transcriptional regulatory protein XfasM23_0940 (244 aa).

It belongs to the TACO1 family.

The protein localises to the cytoplasm. The protein is Probable transcriptional regulatory protein XfasM23_0940 of Xylella fastidiosa (strain M23).